Here is a 326-residue protein sequence, read N- to C-terminus: Probable cell division protein WhiA (326 aa).

Positions 275–308 form a DNA-binding region, H-T-H motif; the sequence is SLEELGQLADPPLTKDAIAGRIRRLLAMADKRAA.

It belongs to the WhiA family.

Involved in cell division and chromosome segregation. This Thermobifida fusca (strain YX) protein is Probable cell division protein WhiA.